We begin with the raw amino-acid sequence, 386 residues long: MTSENPLLALREKISALDEKLLALLAERRELAVEVGKAKLLSHRPVRDIDRERDLLERLITLGKAHHLDAHYITRLFQLIIEDSVLTQQALLQQHLNKINPHSARIAFLGPKGSYSHLAARQYAARHFEQFIESGCAKFADIFNQVETGQADYAVVPIENTSSGAINDVYDLLQHTSLSIVGEMTLTIDHCLLVSGTTDLSTINTVYSHPQPFQQCSKFLNRYPHWKIEYTESTSAAMEKVAQAKSPHVAALGSEAGGTLYGLQVLERIEANQRQNFTRFVVLARKAINVSDQVPAKTTLLMATGQQAGALVEALLVLRNHNLIMTRLESRPIHGNPWEEMFYLDIQANLESAEMQKALKELGEITRSMKVLGCYPSENVVPVDPT.

One can recognise a Chorismate mutase domain in the interval 1–92; the sequence is MTSENPLLAL…DSVLTQQALL (92 aa). Substrate-binding residues include R11, R28, K39, D48, E52, S84, and Q88. The Prephenate dehydratase domain maps to 105–285; the sequence is RIAFLGPKGS…NFTRFVVLAR (181 aa). The ACT domain maps to 299-376; that stretch reads TLLMATGQQA…RSMKVLGCYP (78 aa).

The protein localises to the cytoplasm. The enzyme catalyses chorismate = prephenate. It catalyses the reaction prephenate + H(+) = 3-phenylpyruvate + CO2 + H2O. Its pathway is amino-acid biosynthesis; L-phenylalanine biosynthesis; phenylpyruvate from prephenate: step 1/1. The protein operates within metabolic intermediate biosynthesis; prephenate biosynthesis; prephenate from chorismate: step 1/1. Its function is as follows. Catalyzes the Claisen rearrangement of chorismate to prephenate and the decarboxylation/dehydration of prephenate to phenylpyruvate. The protein is Bifunctional chorismate mutase/prephenate dehydratase (pheA) of Escherichia coli O157:H7.